We begin with the raw amino-acid sequence, 441 residues long: MKISKTLLQHGRKVIDKYNLYVPTEGVFPKGYKVGSIASGVKKNGNLDLGVLVNTNTSRPSSAAAVFTTNKFKAAPVLTSKKVLESTQGNGINAIVVNSGCANAVTGELGMQDAQEMIDLVNRKIGKPNSTLVMSTGVIGQRLQMDKISAGIKNIFDNNALGNDFKSWLNIAKSINTTDTFPKLVSRQFELLNGQKYTLVGMAKGAGMICPNMATLLGYFVTDLPIASSALQKILRFATDRSFNCISVDGDMSTNDTICMIANGAVETDEITESSEEYEQVKSQVTEFAKTLAQLVVRDGEGSTKFVTVNVQNSLTFEDAKIIAESISNSMLVKTALYGQDANWGRILCAIGYAKLDNLKSLNTDSISVSFIATDNSEPRELKLVENGVPQLDVDEERAAQILALDDLEVLVDLKTGNESAQFWTCDLSHEYVTINGDYRS.

Residues T177, K204, T215, E301, N436, and S441 each contribute to the substrate site. The active-site Nucleophile is T215.

This sequence belongs to the ArgJ family. Heterodimer of an alpha and a beta chain. In terms of processing, the alpha and beta chains are autoproteolytically processed from a single precursor protein within the mitochondrion.

It localises to the mitochondrion matrix. It catalyses the reaction N(2)-acetyl-L-ornithine + L-glutamate = N-acetyl-L-glutamate + L-ornithine. The catalysed reaction is L-glutamate + acetyl-CoA = N-acetyl-L-glutamate + CoA + H(+). It functions in the pathway amino-acid biosynthesis; L-arginine biosynthesis; L-ornithine and N-acetyl-L-glutamate from L-glutamate and N(2)-acetyl-L-ornithine (cyclic): step 1/1. The protein operates within amino-acid biosynthesis; L-arginine biosynthesis; N(2)-acetyl-L-ornithine from L-glutamate: step 1/4. Catalyzes two activities which are involved in the cyclic version of arginine biosynthesis: the synthesis of acetylglutamate from glutamate and acetyl-CoA, and of ornithine by transacetylation between acetylornithine and glutamate. This Candida glabrata (strain ATCC 2001 / BCRC 20586 / JCM 3761 / NBRC 0622 / NRRL Y-65 / CBS 138) (Yeast) protein is Arginine biosynthesis bifunctional protein ArgJ, mitochondrial.